The following is a 249-amino-acid chain: Proline-rich antigen (249 aa).

Pro residues-rich tracts occupy residues 1-20 and 38-87; these read MTDQ…PPPG and YPPP…PPGP. Positions 1-87 are disordered; that stretch reads MTDQPPPSGS…GAYAPPPPGP (87 aa). Residues 34–43 form a 1-1; approximate repeat; it reads LGSAYPPPTA. The 5 X 10 AA tandem repeats of [PV]-G-G-S-Y-P-P-P-P-P stretch occupies residues 34–85; the sequence is LGSAYPPPTAPPVGGSYPPPPPPGGSYPPPPPPGGSYPPPPPSTGAYAPPPP. Tandem repeats lie at residues 46-55, 56-65, and 66-75. Residues 76 to 85 form a 1-5; approximate repeat; it reads STGAYAPPPP. Residues 99 to 242 form the RDD domain; it reads FWVTRVLAYV…KRQTLADKIM (144 aa). Tandem repeats lie at residues 101–123 and 134–156. The segment at 101-156 is 2 X 23 AA approximate repeats; the sequence is VTRVLAYVIDNIPATVLLGIGMLIQTLTKQEACVTDITQYNVNQYCATQPTGIGML. The next 3 membrane-spanning stretches (helical) occupy residues 104-124, 151-171, and 212-232; these read VLAY…GMLI, TGIG…YLVW, and LAHF…LWDS.

The protein belongs to the mycobacterial Pra family.

It localises to the cell membrane. The protein is Proline-rich antigen (ag36) of Mycobacterium leprae (strain TN).